Reading from the N-terminus, the 210-residue chain is Uracil phosphoribosyltransferase (210 aa).

Residues arginine 80, arginine 105, and aspartate 132–serine 140 each bind 5-phospho-alpha-D-ribose 1-diphosphate. Uracil contacts are provided by residues isoleucine 195 and glycine 200–alanine 202. Aspartate 201 contacts 5-phospho-alpha-D-ribose 1-diphosphate.

This sequence belongs to the UPRTase family. Requires Mg(2+) as cofactor.

The enzyme catalyses UMP + diphosphate = 5-phospho-alpha-D-ribose 1-diphosphate + uracil. The protein operates within pyrimidine metabolism; UMP biosynthesis via salvage pathway; UMP from uracil: step 1/1. Its activity is regulated as follows. Allosterically activated by GTP. Catalyzes the conversion of uracil and 5-phospho-alpha-D-ribose 1-diphosphate (PRPP) to UMP and diphosphate. The protein is Uracil phosphoribosyltransferase of Caldanaerobacter subterraneus subsp. tengcongensis (strain DSM 15242 / JCM 11007 / NBRC 100824 / MB4) (Thermoanaerobacter tengcongensis).